Consider the following 229-residue polypeptide: Enolase-phosphatase E1 (229 aa).

It belongs to the HAD-like hydrolase superfamily. MasA/MtnC family. As to quaternary structure, monomer. Mg(2+) serves as cofactor.

The enzyme catalyses 5-methylsulfanyl-2,3-dioxopentyl phosphate + H2O = 1,2-dihydroxy-5-(methylsulfanyl)pent-1-en-3-one + phosphate. Its pathway is amino-acid biosynthesis; L-methionine biosynthesis via salvage pathway; L-methionine from S-methyl-5-thio-alpha-D-ribose 1-phosphate: step 3/6. It functions in the pathway amino-acid biosynthesis; L-methionine biosynthesis via salvage pathway; L-methionine from S-methyl-5-thio-alpha-D-ribose 1-phosphate: step 4/6. In terms of biological role, bifunctional enzyme that catalyzes the enolization of 2,3-diketo-5-methylthiopentyl-1-phosphate (DK-MTP-1-P) into the intermediate 2-hydroxy-3-keto-5-methylthiopentenyl-1-phosphate (HK-MTPenyl-1-P), which is then dephosphorylated to form the acireductone 1,2-dihydroxy-3-keto-5-methylthiopentene (DHK-MTPene). The protein is Enolase-phosphatase E1 of Yersinia pseudotuberculosis serotype O:1b (strain IP 31758).